A 651-amino-acid chain; its full sequence is Sodium/potassium/calcium exchanger 2 (651 aa).

Over 1–38 (MALCKKTVGSVLEEWCLNEPLFGCKRHQNVRKKLRLIR) the chain is Cytoplasmic. The helical transmembrane segment at 39-59 (IIGLLVSVVAISTFSLSISAF) threads the bilayer. Topologically, residues 60–134 (FKMETHSTVL…DLFSLEERRK (75 aa)) are extracellular. A disordered region spans residues 92 to 123 (QNEGSTPDSPTSMKHEAEHDNATEEHSKGEYP). Polar residues predominate over residues 93–103 (NEGSTPDSPTS). Positions 104 to 122 (MKHEAEHDNATEEHSKGEY) are enriched in basic and acidic residues. An N-linked (GlcNAc...) asparagine glycan is attached at Asn112. Residues 135–155 (GAVILHVIGMIYMFIALAIVC) traverse the membrane as a helical segment. Topologically, residues 156-179 (DEFFVPSLTVITEKLSISDDVAGA) are cytoplasmic. The stretch at 176–216 (VAGATFMAAGGSAPELFTSLIGVFISHSNVGIGTIVGSAVF) is one Alpha-1 repeat. Residues 180–200 (TFMAAGGSAPELFTSLIGVFI) form a helical membrane-spanning segment. Over 201–206 (SHSNVG) the chain is Extracellular. A helical membrane pass occupies residues 207-227 (IGTIVGSAVFNILFVIGMCAL). The Cytoplasmic segment spans residues 228–245 (FSREILNLTWWPLFRDVS). The helical transmembrane segment at 246–266 (FYIVDLILLIIFFLDNLIMWW) threads the bilayer. Residues 267–459 (ESLTLLTAYF…SLAWPDTPRK (193 aa)) are Extracellular-facing. Residues 304-322 (ATTGDAEGKSPTAGDKDDQ) are compositionally biased toward basic and acidic residues. The interval 304 to 338 (ATTGDAEGKSPTAGDKDDQTLTTKPRLQRGGSSAS) is disordered. A compositionally biased stretch (polar residues) spans 323-338 (TLTTKPRLQRGGSSAS). A helical transmembrane segment spans residues 460–480 (QLTYLLVLPIVFPLWVSLPDV). Residues 481-487 (RNPRSRK) are Cytoplasmic-facing. Residues 488 to 508 (FFPITFFGSISWIAFFSYLMV) form a helical membrane-spanning segment. Topologically, residues 509–523 (WWAHQVGETIGISEE) are extracellular. The helical transmembrane segment at 524-544 (IMGLTILAAGTSIPDLITSVI) threads the bilayer. Residues 531–562 (AAGTSIPDLITSVIVARKGLGDMAVSSSVGSN) form an Alpha-2 repeat. Residues 545-562 (VARKGLGDMAVSSSVGSN) are Cytoplasmic-facing. A helical membrane pass occupies residues 563–583 (IFDITVGLPLPWLLYAVINNF). Residues 584–592 (SPVTVSSNG) lie on the Extracellular side of the membrane. A helical transmembrane segment spans residues 593 to 613 (LFCAIVLLFIMLLFVILSIAF). Residues 614–620 (CKWRMNK) lie on the Cytoplasmic side of the membrane. A helical membrane pass occupies residues 621–641 (FLGFLMFGLYFVFLIVSVLLE). Residues 642 to 651 (DKVIQCPVSI) are Extracellular-facing.

This sequence belongs to the Ca(2+):cation antiporter (CaCA) (TC 2.A.19) family. SLC24A subfamily. In terms of tissue distribution, retinal cones. Found in the cone inner segment layer and in a subpopulation of ganglion cells.

The protein localises to the cell membrane. It carries out the reaction Ca(2+)(out) + K(+)(out) + 4 Na(+)(in) = Ca(2+)(in) + K(+)(in) + 4 Na(+)(out). Calcium, potassium:sodium antiporter that transports 1 Ca(2+) and 1 K(+) in exchange for 4 Na(+). Required for learming and memory by regulating neuronal Ca(2+), which is essential for the development of synaptic plasticity. The chain is Sodium/potassium/calcium exchanger 2 (SLC24A2) from Gallus gallus (Chicken).